A 313-amino-acid polypeptide reads, in one-letter code: Non-functional target of rapamycin complex subunit LST8-2 (313 aa).

WD repeat units follow at residues 1–35 (MFEN…CYFS), 38–76 (YPDL…PHIP), 82–121 (SHTK…CQRE), 123–162 (RSVS…CSCE), 166–205 (EVGT…QTMT), 215–255 (AHNS…LEKV), and 258–297 (GHER…EEMV).

This sequence belongs to the WD repeat LST8 family.

Functionally, probable non-functional protein. The chain is Non-functional target of rapamycin complex subunit LST8-2 from Arabidopsis thaliana (Mouse-ear cress).